The sequence spans 468 residues: 3-isopropylmalate dehydratase large subunit (468 aa).

Residues Cys-346, Cys-406, and Cys-409 each coordinate [4Fe-4S] cluster.

Belongs to the aconitase/IPM isomerase family. LeuC type 1 subfamily. In terms of assembly, heterodimer of LeuC and LeuD. It depends on [4Fe-4S] cluster as a cofactor.

It carries out the reaction (2R,3S)-3-isopropylmalate = (2S)-2-isopropylmalate. Its pathway is amino-acid biosynthesis; L-leucine biosynthesis; L-leucine from 3-methyl-2-oxobutanoate: step 2/4. Catalyzes the isomerization between 2-isopropylmalate and 3-isopropylmalate, via the formation of 2-isopropylmaleate. The chain is 3-isopropylmalate dehydratase large subunit from Pseudoalteromonas atlantica (strain T6c / ATCC BAA-1087).